Consider the following 199-residue polypeptide: Interleukin-11 (199 aa).

Positions methionine 1 to alanine 21 are cleaved as a signal peptide. Residues histidine 182–arginine 190 form an important for interaction with IL11RA and for the stimulation of cell proliferation region.

This sequence belongs to the IL-6 superfamily. Interacts with IL11RA to associate with IL6ST, giving rise to a multimeric signaling complex.

It is found in the secreted. Cytokine that stimulates the proliferation of hematopoietic stem cells and megakaryocyte progenitor cells and induces megakaryocyte maturation resulting in increased platelet production. Also promotes the proliferation of hepatocytes in response to liver damage. Binding to its receptor formed by IL6ST and IL11RA activates a signaling cascade that promotes cell proliferation. Signaling leads to the activation of intracellular protein kinases and the phosphorylation of STAT3. The interaction with the membrane-bound IL11RA and IL6ST stimulates 'classic signaling', whereas the binding of IL11 and soluble IL11RA to IL6ST stimulates 'trans-signaling'. The polypeptide is Interleukin-11 (IL11) (Macaca fascicularis (Crab-eating macaque)).